The primary structure comprises 1709 residues: Protein SHORTAGE IN CHIASMATA 1 homolog (1709 aa).

Composition is skewed to basic and acidic residues over residues 532-542 (PKLQDEDKHSD), 552-568 (DPQK…EGGT), and 1601-1613 (ESFR…DTPS). Disordered stretches follow at residues 532–586 (PKLQ…SSFP) and 1566–1662 (KRKA…DPTW).

This sequence belongs to the XPF family. In terms of assembly, interacts (via C-terminus) with PTD. Interacts with ZIP4. Highly expressed in anthers and pistil during meiosis. Expressed in pollen mother cells (PMCs) during meiosis. Expressed at low levels in roots, shoots, leaves, flowers, and glumes.

Its subcellular location is the chromosome. It is found in the nucleus. The protein localises to the cytoplasm. The protein resides in the cell membrane. In terms of biological role, essential for normal crossover (CO) formation during meiosis. Essential component for the formation of class I meiotic COs. Interacts with PTD, another meiotic component, to regulate CO formation, possibly by stabilizing the recombination intermediates during meiosis. SHOC1 and PTD may form transient heterotrimeric or heterotetrameric complexes with HEI10 and/or ZIP4 to promote class I COs formation. Does not seem to be involved in early meiotic recombination steps involving double-strand break (DSB) formation, processing, and single-strand invasion. Does not seem to be involved in homologous pairing or synaptonemal complex (SC) assembly. This is Protein SHORTAGE IN CHIASMATA 1 homolog from Oryza sativa subsp. japonica (Rice).